The primary structure comprises 171 residues: MDYKQYITIVEDWPQEGIRFKDITTLMQNGTAYKRAVEELAVYAKEKQADVIVGPEARGFVVGCPIATELEIGFVPVRKKGKLPREVIEANYGLEYGKDCLTIHKDSIQPGQRVVITDDLLATGGTIEATAKMVEQLGGKVVGIAFLIELAYIGGRDKLKQYDLFSLMSYE.

Belongs to the purine/pyrimidine phosphoribosyltransferase family. In terms of assembly, homodimer.

The protein localises to the cytoplasm. The catalysed reaction is AMP + diphosphate = 5-phospho-alpha-D-ribose 1-diphosphate + adenine. The protein operates within purine metabolism; AMP biosynthesis via salvage pathway; AMP from adenine: step 1/1. Functionally, catalyzes a salvage reaction resulting in the formation of AMP, that is energically less costly than de novo synthesis. The protein is Adenine phosphoribosyltransferase of Shouchella clausii (strain KSM-K16) (Alkalihalobacillus clausii).